The following is a 320-amino-acid chain: Pantothenate kinase (320 aa).

Residue 96 to 103 (GSVAVGKS) coordinates ATP.

This sequence belongs to the prokaryotic pantothenate kinase family.

Its subcellular location is the cytoplasm. The catalysed reaction is (R)-pantothenate + ATP = (R)-4'-phosphopantothenate + ADP + H(+). It participates in cofactor biosynthesis; coenzyme A biosynthesis; CoA from (R)-pantothenate: step 1/5. The polypeptide is Pantothenate kinase (Brevibacillus brevis (strain 47 / JCM 6285 / NBRC 100599)).